The primary structure comprises 406 residues: MIVLVVNSGSSSIKYQLLDMDNEKVLCKGLAERIGIPGSRIVHKKAGEKFIVEKPMPNHDEALKIVLEVLKDEKLGAIKDFKEIDAVGHRVVHGGEKFSGSVLIDDEVIKAIEEFSYLAPLHNPPNLMGIKAIMKLLPGVPNIGVFDTAFHAKMPEKAYLYAIPYEFYEKYKIRRYGFHGTSHRYVSKRTAEILGLDYNKAKIVTVHLGNGASIAAVKNGKSVDTSMGFTPLEGLVMGTRSGDLDPSIVTFLMEKEGLSAEEVYTILNKKSGVLGLSKNFSSDMRDIEDKALENDPLCRLVLDIYEYRIAKYIGAYAAAMNGVDAISFTAGVGENSPITREEICVNYLSFLGIKIDKEKNNVKGEERIISTPDSKVKVLVVPTNEELMIARDTKEIIEKGLKQLEY.

Asparagine 7 is a binding site for Mg(2+). Lysine 14 is an ATP binding site. Arginine 90 is a binding site for substrate. Aspartate 147 (proton donor/acceptor) is an active-site residue. ATP contacts are provided by residues 207–211 (HLGNG), 283–285 (DMR), and 331–335 (GVGEN). Glutamate 385 is a Mg(2+) binding site.

The protein belongs to the acetokinase family. In terms of assembly, homodimer. Mg(2+) serves as cofactor. Requires Mn(2+) as cofactor.

Its subcellular location is the cytoplasm. The enzyme catalyses acetate + ATP = acetyl phosphate + ADP. It functions in the pathway metabolic intermediate biosynthesis; acetyl-CoA biosynthesis; acetyl-CoA from acetate: step 1/2. Functionally, catalyzes the formation of acetyl phosphate from acetate and ATP. Can also catalyze the reverse reaction. The polypeptide is Acetate kinase (Thermosipho melanesiensis (strain DSM 12029 / CIP 104789 / BI429)).